A 605-amino-acid polypeptide reads, in one-letter code: Probable serine/threonine-protein kinase DDB_G0286481 (605 aa).

A helical transmembrane segment spans residues 5–25 (YQIFFLLYLLCILYVISCGYI). N-linked (GlcNAc...) asparagine glycosylation is present at Asn-53. Composition is skewed to low complexity over residues 54–81 (SSNNNNNNNNNNNNNNNNNNNNNNNNNN) and 89–104 (NCNNNSSNNNSDNKSN). Residues 54 to 170 (SSNNNNNNNN…LGGSMGSGSQ (117 aa)) form a disordered region. 4 N-linked (GlcNAc...) asparagine glycosylation sites follow: Asn-92, Asn-93, Asn-97, and Asn-101. Over residues 105-123 (IKNKQHHHHSNFRNRRGKS) the composition is skewed to basic residues. The N-linked (GlcNAc...) asparagine glycan is linked to Asn-127. The span at 144–155 (QSSSYDTSELHQ) shows a compositional bias: polar residues. Asn-280 is a glycosylation site (N-linked (GlcNAc...) asparagine). Positions 312 to 597 (YEVIQKIGRG…AKEAMKHPYF (286 aa)) constitute a Protein kinase domain. Residues 318 to 326 (IGRGKYSEV) and Lys-341 contribute to the ATP site. N-linked (GlcNAc...) asparagine glycosylation is present at Asn-390. Asp-429 acts as the Proton acceptor in catalysis. An N-linked (GlcNAc...) asparagine glycan is attached at Asn-601.

Belongs to the protein kinase superfamily. CMGC Ser/Thr protein kinase family.

The protein resides in the membrane. It catalyses the reaction L-seryl-[protein] + ATP = O-phospho-L-seryl-[protein] + ADP + H(+). The catalysed reaction is L-threonyl-[protein] + ATP = O-phospho-L-threonyl-[protein] + ADP + H(+). In Dictyostelium discoideum (Social amoeba), this protein is Probable serine/threonine-protein kinase DDB_G0286481.